The sequence spans 214 residues: GTP-binding nuclear protein Ran (214 aa).

Residues 6–170 (YIPQYKLILV…LWLARRLSNQ (165 aa)) form the Small GTPase Ran-type domain. Residue 17 to 24 (DGGVGKTT) participates in GTP binding. The switch-I stretch occupies residues 36-44 (KKYIPTLGV). GTP contacts are provided by residues G67, 121–124 (NKVD), and 149–151 (SAR). Residues 67–83 (GQEKFGGLRDGYYIKSD) form a switch-II region.

Belongs to the small GTPase superfamily. Ran family. As to quaternary structure, found in a nuclear export complex with RanGTP, exportin and pre-miRNA.

It localises to the nucleus. GTP-binding protein involved in nucleocytoplasmic transport. Required for the import of protein into the nucleus and also for RNA export. Involved in chromatin condensation and control of cell cycle. The polypeptide is GTP-binding nuclear protein Ran (Plasmodium falciparum).